A 552-amino-acid polypeptide reads, in one-letter code: Asparagine--tRNA ligase, cytoplasmic (552 aa).

The disordered stretch occupies residues 1-23 (MSQVYVNEKTGADSTDVSGSEQQ). Polar residues predominate over residues 12–23 (ADSTDVSGSEQQ).

It belongs to the class-II aminoacyl-tRNA synthetase family.

The protein resides in the cytoplasm. The enzyme catalyses tRNA(Asn) + L-asparagine + ATP = L-asparaginyl-tRNA(Asn) + AMP + diphosphate + H(+). This Debaryomyces hansenii (strain ATCC 36239 / CBS 767 / BCRC 21394 / JCM 1990 / NBRC 0083 / IGC 2968) (Yeast) protein is Asparagine--tRNA ligase, cytoplasmic (DED81).